Consider the following 489-residue polypeptide: Rhamnulokinase (489 aa).

13-17 serves as a coordination point for ATP; sequence ASSGR. Cysteines 68 and 222 form a disulfide. Residues Gly-83 and 236-238 contribute to the substrate site; that span reads HDT. Asp-237 (proton acceptor) is an active-site residue. Position 259 (Thr-259) interacts with ATP. Position 296 (Asn-296) interacts with substrate. Gln-304 lines the ATP pocket. Cys-353 and Cys-370 form a disulfide bridge. Residue Gly-402 coordinates ATP. Residues Cys-413 and Cys-417 are joined by a disulfide bond.

It belongs to the rhamnulokinase family. In terms of assembly, monomer. Mg(2+) is required as a cofactor.

The enzyme catalyses L-rhamnulose + ATP = L-rhamnulose 1-phosphate + ADP + H(+). The protein operates within carbohydrate degradation; L-rhamnose degradation; glycerone phosphate from L-rhamnose: step 2/3. Functionally, involved in the catabolism of L-rhamnose (6-deoxy-L-mannose). Catalyzes the transfer of the gamma-phosphate group from ATP to the 1-hydroxyl group of L-rhamnulose to yield L-rhamnulose 1-phosphate. This Escherichia coli O1:K1 / APEC protein is Rhamnulokinase.